Here is a 437-residue protein sequence, read N- to C-terminus: Carbonic anhydrase 9 (437 aa).

The signal sequence occupies residues 1–31 (MASLGPSPWAPLSTPAPTAQLLLFLLLQVSA). Residues 32–95 (QPQGLSGMQG…RMEESLGLED (64 aa)) form a proteoglycan-like (PG) region. Topologically, residues 32–390 (QPQGLSGMQG…HVNSCFTAGD (359 aa)) are extracellular. The segment at 34–118 (QGLSGMQGEP…HGDEKGGGHS (85 aa)) is disordered. Residues 50 to 79 (SGEDELGVDVLPSEEDAPEEADPPDGEDPP) show a composition bias toward acidic residues. Residues 96–390 (LSTPEAPEHS…HVNSCFTAGD (295 aa)) are catalytic. Thr98 carries an O-linked (GlcNAc...) threonine glycan. Positions 118–369 (SHWSYGGTLL…LNGRTIEASF (252 aa)) constitute an Alpha-carbonic anhydrase domain. Cys135 and Cys315 form a disulfide bridge. His179 acts as the Proton donor/acceptor in catalysis. Positions 205, 207, and 230 each coordinate Zn(2+). Position 311 to 312 (311 to 312 (TT)) interacts with substrate. Asn325 is a glycosylation site (N-linked (GlcNAc...) asparagine). Residues 391 to 411 (ILALVFGLLFAVTSIAFLLQL) traverse the membrane as a helical segment. The Cytoplasmic segment spans residues 412–437 (RRQHRHRSGTKDRVSYSPAEMTETGA). A Phosphotyrosine modification is found at Tyr427.

This sequence belongs to the alpha-carbonic anhydrase family. Forms oligomers linked by disulfide bonds. Zn(2+) serves as cofactor. In terms of processing, asn-325 bears high-mannose type glycan structures.

The protein localises to the nucleus. The protein resides in the nucleolus. It localises to the cell membrane. It is found in the cell projection. Its subcellular location is the microvillus membrane. The catalysed reaction is hydrogencarbonate + H(+) = CO2 + H2O. Inhibited by acetazolamide. In terms of biological role, catalyzes the interconversion between carbon dioxide and water and the dissociated ions of carbonic acid (i.e. bicarbonate and hydrogen ions). This Mus musculus (Mouse) protein is Carbonic anhydrase 9 (Ca9).